The chain runs to 176 residues: Acireductone dioxygenase (176 aa).

Positions 91, 93, 97, and 136 each coordinate Fe(2+). Residues His-91, His-93, Glu-97, and His-136 each coordinate Ni(2+).

It belongs to the acireductone dioxygenase (ARD) family. In terms of assembly, monomer. Fe(2+) serves as cofactor. The cofactor is Ni(2+).

It carries out the reaction 1,2-dihydroxy-5-(methylsulfanyl)pent-1-en-3-one + O2 = 3-(methylsulfanyl)propanoate + CO + formate + 2 H(+). It catalyses the reaction 1,2-dihydroxy-5-(methylsulfanyl)pent-1-en-3-one + O2 = 4-methylsulfanyl-2-oxobutanoate + formate + 2 H(+). Its pathway is amino-acid biosynthesis; L-methionine biosynthesis via salvage pathway; L-methionine from S-methyl-5-thio-alpha-D-ribose 1-phosphate: step 5/6. In terms of biological role, catalyzes 2 different reactions between oxygen and the acireductone 1,2-dihydroxy-3-keto-5-methylthiopentene (DHK-MTPene) depending upon the metal bound in the active site. Fe-containing acireductone dioxygenase (Fe-ARD) produces formate and 2-keto-4-methylthiobutyrate (KMTB), the alpha-ketoacid precursor of methionine in the methionine recycle pathway. Ni-containing acireductone dioxygenase (Ni-ARD) produces methylthiopropionate, carbon monoxide and formate, and does not lie on the methionine recycle pathway. The polypeptide is Acireductone dioxygenase (Picosynechococcus sp. (strain ATCC 27264 / PCC 7002 / PR-6) (Agmenellum quadruplicatum)).